A 99-amino-acid polypeptide reads, in one-letter code: Nucleoid-associated protein SPy_1862/M5005_Spy1580 (99 aa).

It belongs to the YbaB/EbfC family. Homodimer.

It localises to the cytoplasm. The protein resides in the nucleoid. Its function is as follows. Binds to DNA and alters its conformation. May be involved in regulation of gene expression, nucleoid organization and DNA protection. The chain is Nucleoid-associated protein SPy_1862/M5005_Spy1580 from Streptococcus pyogenes serotype M1.